A 178-amino-acid polypeptide reads, in one-letter code: Large ribosomal subunit protein bL25 (178 aa).

This sequence belongs to the bacterial ribosomal protein bL25 family. CTC subfamily. Part of the 50S ribosomal subunit; part of the 5S rRNA/L5/L18/L25 subcomplex. Contacts the 5S rRNA. Binds to the 5S rRNA independently of L5 and L18.

Functionally, this is one of the proteins that binds to the 5S RNA in the ribosome where it forms part of the central protuberance. The protein is Large ribosomal subunit protein bL25 of Campylobacter hominis (strain ATCC BAA-381 / DSM 21671 / CCUG 45161 / LMG 19568 / NCTC 13146 / CH001A).